We begin with the raw amino-acid sequence, 598 residues long: Elongation factor 4 (598 aa).

The tr-type G domain occupies 2-184 (KQIRNFSIIA…RLVKEIPAPE (183 aa)). Residues 14–19 (DHGKST) and 131–134 (NKID) each bind GTP.

The protein belongs to the TRAFAC class translation factor GTPase superfamily. Classic translation factor GTPase family. LepA subfamily.

The protein resides in the cell inner membrane. It carries out the reaction GTP + H2O = GDP + phosphate + H(+). In terms of biological role, required for accurate and efficient protein synthesis under certain stress conditions. May act as a fidelity factor of the translation reaction, by catalyzing a one-codon backward translocation of tRNAs on improperly translocated ribosomes. Back-translocation proceeds from a post-translocation (POST) complex to a pre-translocation (PRE) complex, thus giving elongation factor G a second chance to translocate the tRNAs correctly. Binds to ribosomes in a GTP-dependent manner. The chain is Elongation factor 4 from Photorhabdus laumondii subsp. laumondii (strain DSM 15139 / CIP 105565 / TT01) (Photorhabdus luminescens subsp. laumondii).